Reading from the N-terminus, the 37-residue chain is Cytochrome b6-f complex subunit 5 (37 aa).

The chain crosses the membrane as a helical span at residues 5–25 (LLSGIVLGLIPITLVGLFVTA).

This sequence belongs to the PetG family. As to quaternary structure, the 4 large subunits of the cytochrome b6-f complex are cytochrome b6, subunit IV (17 kDa polypeptide, PetD), cytochrome f and the Rieske protein, while the 4 small subunits are PetG, PetL, PetM and PetN. The complex functions as a dimer.

Its subcellular location is the plastid. The protein resides in the chloroplast thylakoid membrane. Its function is as follows. Component of the cytochrome b6-f complex, which mediates electron transfer between photosystem II (PSII) and photosystem I (PSI), cyclic electron flow around PSI, and state transitions. PetG is required for either the stability or assembly of the cytochrome b6-f complex. The chain is Cytochrome b6-f complex subunit 5 from Welwitschia mirabilis (Tree tumbo).